The following is a 335-amino-acid chain: MEEGSNKREGLPPQLLDLIPDEKEWKLREALGLGRSRNAGFDGEEDKKLDLKLGLPGFIEDDEAETLRDYRLQQESPSLSLSFFPKHSKTTSSTTTTTGAKRGFIDTVEDKTEGYNDQKQQARAGCGKELAVEEMIAAVSERKKGCCPPPPPPHGAPATPARNRPQTQGRGAAAPVVGWPPIRSFRRNLASSSSSKHSPEPQNDNANAKVTLTCKKNPLVKINMDGIPIGRKIDLAAYNSYDGLSSAVKQLFHGFLQAQKDQTNAQIAQQGADDKIFYQLLDGSGEYTLVYEDSEGDRMLVGDVPWKVFVSTAKRLRVLRSSELSHTLIGATARV.

The short motif at 51-55 (LKLGL) is the EAR-like (transcriptional repression) element. Disordered regions lie at residues 81 to 102 (LSFFPKHSKTTSSTTTTTGAKR), 143 to 180 (KKGCCPPPPPPHGAPATPARNRPQTQGRGAAAPVVGWP), and 188 to 207 (NLASSSSSKHSPEPQNDNAN). The PB1 domain occupies 217-321 (NPLVKINMDG…TAKRLRVLRS (105 aa)).

The protein belongs to the Aux/IAA family. In terms of assembly, homodimers and heterodimers. In terms of tissue distribution, highly expressed in roots. Expressed in shoots and flowers.

Its subcellular location is the nucleus. In terms of biological role, aux/IAA proteins are short-lived transcriptional factors that function as repressors of early auxin response genes at low auxin concentrations. The polypeptide is Auxin-responsive protein IAA6 (IAA6) (Oryza sativa subsp. japonica (Rice)).